The following is a 36-amino-acid chain: Photosystem I reaction center subunit VIII (36 aa).

Residues 6 to 26 traverse the membrane as a helical segment; the sequence is LPSIFVPLVGLVFPAIAMASL.

Belongs to the PsaI family.

It is found in the plastid. The protein localises to the chloroplast thylakoid membrane. May help in the organization of the PsaL subunit. In Liriodendron tulipifera (Tuliptree), this protein is Photosystem I reaction center subunit VIII.